We begin with the raw amino-acid sequence, 609 residues long: Tyrosyl-DNA phosphodiesterase 1 (609 aa).

The span at 1–12 (MSQESSYGKWTI) shows a compositional bias: polar residues. The interval 1 to 155 (MSQESSYGKW…YETSGEGQDI (155 aa)) is disordered. Residue Ser-61 is modified to Phosphoserine. A compositionally biased stretch (basic and acidic residues) spans 105–118 (QPKRVLPQEKKHVS). 2 positions are modified to phosphoserine: Ser-119 and Ser-132. Residue Thr-148 is modified to Phosphothreonine. The residue at position 149 (Ser-149) is a Phosphoserine. The active-site Nucleophile is His-264. Lys-266 contributes to the substrate binding site. An interaction with DNA region spans residues 401 to 404 (SIGS). His-494 (proton donor/acceptor) is an active-site residue. Residue Lys-496 coordinates substrate.

It belongs to the tyrosyl-DNA phosphodiesterase family. As to quaternary structure, monomer. As to expression, ubiquitous.

Its subcellular location is the nucleus. The protein resides in the cytoplasm. Functionally, DNA repair enzyme that can remove a variety of covalent adducts from DNA through hydrolysis of a 3'-phosphodiester bond, giving rise to DNA with a free 3' phosphate. Catalyzes the hydrolysis of dead-end complexes between DNA and the topoisomerase I active site tyrosine residue. Hydrolyzes 3'-phosphoglycolates on protruding 3' ends on DNA double-strand breaks due to DNA damage by radiation and free radicals. Acts on blunt-ended double-strand DNA breaks and on single-stranded DNA. Has low 3'exonuclease activity and can remove a single nucleoside from the 3'end of DNA and RNA molecules with 3'hydroxyl groups. Has no exonuclease activity towards DNA or RNA with a 3'phosphate. The protein is Tyrosyl-DNA phosphodiesterase 1 (Tdp1) of Mus musculus (Mouse).